The sequence spans 152 residues: Transcriptional regulator MraZ (152 aa).

SpoVT-AbrB domains lie at 5 to 52 (HSNR…PMPE) and 81 to 124 (ATEV…DQGR).

It belongs to the MraZ family. Forms oligomers.

Its subcellular location is the cytoplasm. It localises to the nucleoid. This Solidesulfovibrio magneticus (strain ATCC 700980 / DSM 13731 / RS-1) (Desulfovibrio magneticus) protein is Transcriptional regulator MraZ.